A 383-amino-acid polypeptide reads, in one-letter code: 1-deoxy-D-xylulose 5-phosphate reductoisomerase (383 aa).

NADPH-binding residues include Thr10, Gly11, Ser12, Ile13, Gly36, Arg37, Asn38, and Asn122. Lys123 is a 1-deoxy-D-xylulose 5-phosphate binding site. Glu124 is a binding site for NADPH. Residue Asp148 participates in Mn(2+) binding. Positions 149, 150, 174, and 197 each coordinate 1-deoxy-D-xylulose 5-phosphate. Position 150 (Glu150) interacts with Mn(2+). Gly203 is a binding site for NADPH. 1-deoxy-D-xylulose 5-phosphate is bound by residues Ser210, Asn215, Lys216, and Glu219. Glu219 serves as a coordination point for Mn(2+).

It belongs to the DXR family. Mg(2+) is required as a cofactor. Requires Mn(2+) as cofactor.

The catalysed reaction is 2-C-methyl-D-erythritol 4-phosphate + NADP(+) = 1-deoxy-D-xylulose 5-phosphate + NADPH + H(+). The protein operates within isoprenoid biosynthesis; isopentenyl diphosphate biosynthesis via DXP pathway; isopentenyl diphosphate from 1-deoxy-D-xylulose 5-phosphate: step 1/6. Catalyzes the NADPH-dependent rearrangement and reduction of 1-deoxy-D-xylulose-5-phosphate (DXP) to 2-C-methyl-D-erythritol 4-phosphate (MEP). This Bacillus pumilus (strain SAFR-032) protein is 1-deoxy-D-xylulose 5-phosphate reductoisomerase.